The following is an 87-amino-acid chain: MANHKSALKRIKQTEKRTERNRHVRSTLRTFIKRVREAVAAKDANLAKEALAAAIPVIDGAASKGVIHSSNASRSVSRLTKLVNTLS.

Residues 1–11 show a composition bias toward basic residues; that stretch reads MANHKSALKRI. The interval 1–23 is disordered; it reads MANHKSALKRIKQTEKRTERNRH.

This sequence belongs to the bacterial ribosomal protein bS20 family.

Functionally, binds directly to 16S ribosomal RNA. The sequence is that of Small ribosomal subunit protein bS20 from Geotalea daltonii (strain DSM 22248 / JCM 15807 / FRC-32) (Geobacter daltonii).